Reading from the N-terminus, the 311-residue chain is MANPLYQKHIISINDLSREDLELVLATAAKLKANPQPELLKHKVIASCFFEASTRTRLSFETSMHRLGASVVGFSDSANTSLGKKGETLADTISVISTYVDAIVMRHPQEGAARLATEFSGGVPVLNAGDGANQHPTQTLLDLFTIQETQGRLENLNVAMVGDLKYGRTVHSLTQALAKFNGNRFYFIAPDALAMPQYILDMLDEKGIAWSLHSAIDDVMAEVDILYMTRVQKERLDPSEYANVKAQFVLRAADLEGARANMKVLHPLPRIDEITTDVDKTPHAWYFQQAGNGIFARQALLALVLNSELAL.

Residues Arg55 and Thr56 each coordinate carbamoyl phosphate. An L-aspartate-binding site is contributed by Lys85. Positions 106, 135, and 138 each coordinate carbamoyl phosphate. Positions 168 and 230 each coordinate L-aspartate. Carbamoyl phosphate-binding residues include Leu268 and Pro269.

This sequence belongs to the aspartate/ornithine carbamoyltransferase superfamily. ATCase family. In terms of assembly, heterododecamer (2C3:3R2) of six catalytic PyrB chains organized as two trimers (C3), and six regulatory PyrI chains organized as three dimers (R2).

The catalysed reaction is carbamoyl phosphate + L-aspartate = N-carbamoyl-L-aspartate + phosphate + H(+). It participates in pyrimidine metabolism; UMP biosynthesis via de novo pathway; (S)-dihydroorotate from bicarbonate: step 2/3. Its function is as follows. Catalyzes the condensation of carbamoyl phosphate and aspartate to form carbamoyl aspartate and inorganic phosphate, the committed step in the de novo pyrimidine nucleotide biosynthesis pathway. This chain is Aspartate carbamoyltransferase catalytic subunit, found in Klebsiella pneumoniae subsp. pneumoniae (strain ATCC 700721 / MGH 78578).